The chain runs to 225 residues: C-type lectin domain-containing protein 91 (225 aa).

The N-terminal stretch at 1–21 (MRSTYILIIVPLIIIGGGVVA) is a signal peptide. The C-type lectin domain maps to 85–215 (YSDSCYFIET…CTMAFKSICE (131 aa)). 2 disulfides stabilise this stretch: Cys-106/Cys-214 and Cys-185/Cys-206. Asn-217 carries N-linked (GlcNAc...) asparagine glycosylation.

The protein localises to the secreted. This Caenorhabditis elegans protein is C-type lectin domain-containing protein 91 (clec-91).